The sequence spans 206 residues: Small ribosomal subunit protein uS4 (206 aa).

Positions 96–158 constitute an S4 RNA-binding domain; the sequence is SRLDNVVYRM…AKKQLRIQNA (63 aa).

This sequence belongs to the universal ribosomal protein uS4 family. As to quaternary structure, part of the 30S ribosomal subunit. Contacts protein S5. The interaction surface between S4 and S5 is involved in control of translational fidelity.

In terms of biological role, one of the primary rRNA binding proteins, it binds directly to 16S rRNA where it nucleates assembly of the body of the 30S subunit. Functionally, with S5 and S12 plays an important role in translational accuracy. The sequence is that of Small ribosomal subunit protein uS4 from Francisella tularensis subsp. tularensis (strain FSC 198).